We begin with the raw amino-acid sequence, 317 residues long: uncharacterized protein (317 aa).

This sequence belongs to the asfivirus F317L family.

Its subcellular location is the virion. This is an uncharacterized protein from African swine fever virus (strain Badajoz 1971 Vero-adapted) (Ba71V).